A 764-amino-acid polypeptide reads, in one-letter code: 5-methyltetrahydropteroyltriglutamate--homocysteine methyltransferase (764 aa).

5-methyltetrahydropteroyltri-L-glutamate-binding positions include 16–19 and K115; that span reads RELK. Residues 435 to 437 and E488 contribute to the L-homocysteine site; that span reads IGS. Residues 435–437 and E488 contribute to the L-methionine site; that span reads IGS. Residues 519-520 and W565 each bind 5-methyltetrahydropteroyltri-L-glutamate; that span reads RC. Residue D603 participates in L-homocysteine binding. Position 603 (D603) interacts with L-methionine. Residue E609 coordinates 5-methyltetrahydropteroyltri-L-glutamate. Residues H645, C647, and E669 each contribute to the Zn(2+) site. H698 functions as the Proton donor in the catalytic mechanism. C730 is a Zn(2+) binding site.

This sequence belongs to the vitamin-B12 independent methionine synthase family. It depends on Zn(2+) as a cofactor.

It carries out the reaction 5-methyltetrahydropteroyltri-L-glutamate + L-homocysteine = tetrahydropteroyltri-L-glutamate + L-methionine. It participates in amino-acid biosynthesis; L-methionine biosynthesis via de novo pathway; L-methionine from L-homocysteine (MetE route): step 1/1. In terms of biological role, catalyzes the transfer of a methyl group from 5-methyltetrahydrofolate to homocysteine resulting in methionine formation. This is 5-methyltetrahydropteroyltriglutamate--homocysteine methyltransferase from Burkholderia mallei (strain NCTC 10247).